The sequence spans 272 residues: NAD kinase (272 aa).

Catalysis depends on Asp-62, which acts as the Proton acceptor. NAD(+) contacts are provided by residues 62-63, Arg-67, 129-130, Arg-140, Lys-157, Asp-159, Ile-167, 170-175, Ala-194, and Gln-229; these read DG, NE, and SSYSSS.

The protein belongs to the NAD kinase family. The cofactor is a divalent metal cation.

The protein resides in the cytoplasm. It catalyses the reaction NAD(+) + ATP = ADP + NADP(+) + H(+). Its function is as follows. Involved in the regulation of the intracellular balance of NAD and NADP, and is a key enzyme in the biosynthesis of NADP. Catalyzes specifically the phosphorylation on 2'-hydroxyl of the adenosine moiety of NAD to yield NADP. In Thermoplasma acidophilum (strain ATCC 25905 / DSM 1728 / JCM 9062 / NBRC 15155 / AMRC-C165), this protein is NAD kinase.